We begin with the raw amino-acid sequence, 669 residues long: MATTFGSPSGDSRRGVASPRPKGREAKNTFCRNVTIYGHCRYENSKCRPPHLPDHVLNQNENAKKRFNVDSPSFTPLTTTPNGSVTASARNAAISPKAANAAVFTPKSQRSAVSTPNLHNKEPALDWHAPDFQEFVPETFGGPMVDSNASASYSGYDPYTSSANLASIAGQGHQSSAMNPYAQGHSGLEASYYQNPSAFQTSPAYHLYWPVGPQPTSLLGYQRTAHDFFIPDALREDLQKRAEVARQVMPNSTLPVIEQFHSLFCLDTTPQKNNAPFGYVSWIYKAISGKDGKTYALRRLENFRLTSEPAIRSAQAWKRIFNGSIVTIHEAFTTRAFGDSSLIIVTDYHPNSKSLADEHFKPMQRFNGRQATSSHVPEHVLWGYIVQIASALKAIHGSGLAARLISPSKTLLTAKNRIRLNACAIMDIVQFETARPVAEAQADDFVQLGRMILCIANNNTTAHLQMQKSMDHVTRNYTARLKECIQWLLNPQPPLGTPSSPTTPAPGSKDIDNFLGGISDQLASVFDSELHAQDTLTNTLGRELESSRIVRLLVKLNMVNERPELDASQQMSGGNTSNPSSVWAETGERYYLKLFRDYVFHQVDANGHPVTDLAHVLDCLNKLDAGTDEKIALISRDEQNVLIVSFREVKRGLEIAFQDLIRAGRGQGK.

The segment covering 1–10 (MATTFGSPSG) has biased composition (polar residues). A disordered region spans residues 1–25 (MATTFGSPSGDSRRGVASPRPKGRE). The C3H1-type zinc finger occupies 25-54 (EAKNTFCRNVTIYGHCRYENSKCRPPHLPD). A pseudokinase domain region spans residues 247-519 (QVMPNSTLPV…DIDNFLGGIS (273 aa)). Residues Arg-298, 347-354 (DYHPNSKS), and 408-409 (SK) each bind ATP. A coiled-coil region spans residues 520–558 (DQLASVFDSELHAQDTLTNTLGRELESSRIVRLLVKLNM). Residues 559–669 (VNERPELDAS…LIRAGRGQGK (111 aa)) form a knob domain region.

The protein belongs to the protein kinase superfamily. PAN3 family. In terms of assembly, homodimer. Forms a heterotrimer with a catalytic subunit PAN2 to form the poly(A)-nuclease (PAN) deadenylation complex. Interacts (via PAM-2 motif) with poly(A)-binding protein PAB1 (via PABC domain), conferring substrate specificity of the enzyme complex.

It is found in the cytoplasm. In terms of biological role, regulatory subunit of the poly(A)-nuclease (PAN) deadenylation complex, one of two cytoplasmic mRNA deadenylases involved in mRNA turnover. PAN specifically shortens poly(A) tails of RNA and the activity is stimulated by poly(A)-binding protein PAB1. PAN deadenylation is followed by rapid degradation of the shortened mRNA tails by the CCR4-NOT complex. Deadenylated mRNAs are then degraded by two alternative mechanisms, namely exosome-mediated 3'-5' exonucleolytic degradation, or deadenylation-dependent mRNA decaping and subsequent 5'-3' exonucleolytic degradation by XRN1. May also be involved in post-transcriptional maturation of mRNA poly(A) tails. PAN3 acts as a positive regulator for PAN activity, recruiting the catalytic subunit PAN2 to mRNA via its interaction with RNA and with PAB1. This chain is PAN2-PAN3 deadenylation complex subunit PAN3, found in Phaeosphaeria nodorum (strain SN15 / ATCC MYA-4574 / FGSC 10173) (Glume blotch fungus).